Consider the following 306-residue polypeptide: UDP-3-O-acyl-N-acetylglucosamine deacetylase (306 aa).

The Zn(2+) site is built by H78, H237, and D241. The active-site Proton donor is H264.

This sequence belongs to the LpxC family. Zn(2+) is required as a cofactor.

It carries out the reaction a UDP-3-O-[(3R)-3-hydroxyacyl]-N-acetyl-alpha-D-glucosamine + H2O = a UDP-3-O-[(3R)-3-hydroxyacyl]-alpha-D-glucosamine + acetate. Its pathway is glycolipid biosynthesis; lipid IV(A) biosynthesis; lipid IV(A) from (3R)-3-hydroxytetradecanoyl-[acyl-carrier-protein] and UDP-N-acetyl-alpha-D-glucosamine: step 2/6. Its function is as follows. Catalyzes the hydrolysis of UDP-3-O-myristoyl-N-acetylglucosamine to form UDP-3-O-myristoylglucosamine and acetate, the committed step in lipid A biosynthesis. The polypeptide is UDP-3-O-acyl-N-acetylglucosamine deacetylase (Aromatoleum aromaticum (strain DSM 19018 / LMG 30748 / EbN1) (Azoarcus sp. (strain EbN1))).